A 510-amino-acid polypeptide reads, in one-letter code: Propionyl-CoA carboxylase beta chain (510 aa).

The CoA carboxyltransferase N-terminal domain occupies 1-257 (MKDILQELEN…SNRTPAPVRP (257 aa)). Residues 1–504 (MKDILQELEN…NKKLANPWKK (504 aa)) are carboxyltransferase. The region spanning 264–504 (RIEDSLDTLI…NKKLANPWKK (241 aa)) is the CoA carboxyltransferase C-terminal domain.

The protein belongs to the AccD/PCCB family. In terms of assembly, probably a dodecamer composed of six biotin-containing alpha subunits and six beta subunits.

It carries out the reaction propanoyl-CoA + hydrogencarbonate + ATP = (S)-methylmalonyl-CoA + ADP + phosphate + H(+). It participates in metabolic intermediate metabolism; propanoyl-CoA degradation; succinyl-CoA from propanoyl-CoA: step 1/3. This is Propionyl-CoA carboxylase beta chain from Cereibacter sphaeroides (strain ATCC 17023 / DSM 158 / JCM 6121 / CCUG 31486 / LMG 2827 / NBRC 12203 / NCIMB 8253 / ATH 2.4.1.) (Rhodobacter sphaeroides).